The chain runs to 202 residues: Small heat shock protein hspG5 (202 aa).

One can recognise a sHSP domain in the interval lysine 31 to asparagine 202. The tract at residues threonine 96–asparagine 138 is disordered.

The protein belongs to the small heat shock protein (HSP20) family.

This Dictyostelium discoideum (Social amoeba) protein is Small heat shock protein hspG5 (hspG5).